The chain runs to 233 residues: Nickel import system ATP-binding protein NikE (233 aa).

The 227-residue stretch at 2-228 folds into the ABC transporter domain; that stretch reads IELKHVTFGY…DRHSYTKELV (227 aa). Residue 35 to 42 coordinates ATP; the sequence is GESGCGKS.

The protein belongs to the ABC transporter superfamily. The complex is composed of two ATP-binding proteins (NikD and NikE), two transmembrane proteins (NikB and NikC) and a solute-binding protein (NikA).

The protein resides in the cell membrane. It carries out the reaction Ni(2+)(out) + ATP + H2O = Ni(2+)(in) + ADP + phosphate + H(+). Its function is as follows. Part of the ABC transporter complex NikABCDE (Opp2) involved in nickel import. Probably responsible for energy coupling to the transport system. The protein is Nickel import system ATP-binding protein NikE of Staphylococcus aureus (strain bovine RF122 / ET3-1).